The sequence spans 1307 residues: MTQFEGFTNLYQVSKTLRFELIPQGKTLKHIQEQGFIEEDKARNDHYKELKPIIDRIYKTYADQCLQLVQLDWENLSAAIDSYRKEKTEETRNALIEEQATYRNAIHDYFIGRTDNLTDAINKRHAEIYKGLFKAELFNGKVLKQLGTVTTTEHENALLRSFDKFTTYFSGFYENRKNVFSAEDISTAIPHRIVQDNFPKFKENCHIFTRLITAVPSLREHFENVKKAIGIFVSTSIEEVFSFPFYNQLLTQTQIDLYNQLLGGISREAGTEKIKGLNEVLNLAIQKNDETAHIIASLPHRFIPLFKQILSDRNTLSFILEEFKSDEEVIQSFCKYKTLLRNENVLETAEALFNELNSIDLTHIFISHKKLETISSALCDHWDTLRNALYERRISELTGKITKSAKEKVQRSLKHEDINLQEIISAAGKELSEAFKQKTSEILSHAHAALDQPLPTTLKKQEEKEILKSQLDSLLGLYHLLDWFAVDESNEVDPEFSARLTGIKLEMEPSLSFYNKARNYATKKPYSVEKFKLNFQMPTLASGWDVNKEKNNGAILFVKNGLYYLGIMPKQKGRYKALSFEPTEKTSEGFDKMYYDYFPDAAKMIPKCSTQLKAVTAHFQTHTTPILLSNNFIEPLEITKEIYDLNNPEKEPKKFQTAYAKKTGDQKGYREALCKWIDFTRDFLSKYTKTTSIDLSSLRPSSQYKDLGEYYAELNPLLYHISFQRIAEKEIMDAVETGKLYLFQIYNKDFAKGHHGKPNLHTLYWTGLFSPENLAKTSIKLNGQAELFYRPKSRMKRMAHRLGEKMLNKKLKDQKTPIPDTLYQELYDYVNHRLSHDLSDEARALLPNVITKEVSHEIIKDRRFTSDKFFFHVPITLNYQAANSPSKFNQRVNAYLKEHPETPIIGIDRGERNLIYITVIDSTGKILEQRSLNTIQQFDYQKKLDNREKERVAARQAWSVVGTIKDLKQGYLSQVIHEIVDLMIHYQAVVVLENLNFGFKSKRTGIAEKAVYQQFEKMLIDKLNCLVLKDYPAEKVGGVLNPYQLTDQFTSFAKMGTQSGFLFYVPAPYTSKIDPLTGFVDPFVWKTIKNHESRKHFLEGFDFLHYDVKTGDFILHFKMNRNLSFQRGLPGFMPAWDIVFEKNETQFDAKGTPFIAGKRIVPVIENHRFTGRYRDLYPANELIALLEEKGIVFRDGSNILPKLLENDDSHAIDTMVALIRSVLQMRNSNAATGEDYINSPVRDLNGVCFDSRFQNPEWPMDADANGAYHIALKGQLLLNHLKESKDLKLQNGISNQDWLAYIQELRN.

A WED-I (OBD-I) region spans residues 1–35 (MTQFEGFTNLYQVSKTLRFELIPQGKTLKHIQEQG). Positions 36-320 (FIEEDKARND…SDRNTLSFIL (285 aa)) are REC1 (helical-I). Residue 47–51 (YKELK) coordinates crRNA. Positions 74–106 (ENLSAAIDSYRKEKTEETRNALIEEQATYRNAI) form a coiled coil. CrRNA is bound by residues 175 to 176 (NR) and 307 to 310 (KQIL). The segment at 321–526 (EEFKSDEEVI…ARNYATKKPY (206 aa)) is WED-II (helical-II). The segment at 527–598 (SVEKFKLNFQ…GFDKMYYDYF (72 aa)) is WED-II (OBD-I). The PAM-binding on target DNA DNA-binding region spans 599–607 (PDAAKMIPK). Residues 599-718 (PDAAKMIPKC…EYYAELNPLL (120 aa)) form a PI (LHD) region. The WED-III (OBD-III) stretch occupies residues 719–884 (YHISFQRIAE…ITLNYQAANS (166 aa)). 752-761 (KGHHGKPNLH) contacts crRNA. The target DNA DNA-binding region spans 780 to 783 (KLNG). The active-site For pre-crRNA processing is H800. 806 to 808 (MLN) lines the crRNA pocket. Catalysis depends on for pre-crRNA processing residues K809 and K860. A ruvC-I region spans residues 885-940 (PSKFNQRVNAYLKEHPETPIIGIDRGERNLIYITVIDSTGKILEQRSLNTIQQFDY). The active-site For DNase activity of RuvC domain is the D908. The interval 941–957 (QKKLDNREKERVAARQA) is bridge helix. Positions 951 to 968 (RVAARQAWSVVGTIKDLK) form a DNA-binding region, target DNA. The ruvC-II stretch occupies residues 958 to 1066 (WSVVGTIKDL…TQSGFLFYVP (109 aa)). Catalysis depends on E993, which acts as the For DNase activity of RuvC domain. A DNA-binding region (target DNA) is located at residues 1051-1053 (SFA). Residues 1067-1262 (APYTSKIDPL…FQNPEWPMDA (196 aa)) are nuclease domain. R1226 serves as the catalytic For DNase activity of nuclease domain. D1263 serves as the catalytic For DNase activity of RuvC domain. The tract at residues 1263–1307 (DANGAYHIALKGQLLLNHLKESKDLKLQNGISNQDWLAYIQELRN) is ruvC-III.

The protein belongs to the CRISPR-associated endonuclease Cas12a family. In terms of assembly, monomer. It depends on Mg(2+) as a cofactor.

It catalyses the reaction Endonucleolytic cleavage to 5'-phosphodinucleotide and 5'-phosphooligonucleotide end-products.. The enzyme catalyses RNA = a 5'-hydroxy-ribonucleotide + n nucleoside-2',3'-cyclophosphates.. CRISPR (clustered regularly interspaced short palindromic repeat), is an adaptive immune system that provides protection against mobile genetic elements (viruses, transposable elements and conjugative plasmids). CRISPR clusters contain sequences complementary to antecedent mobile elements and target invading nucleic acids. CRISPR clusters are transcribed and processed into CRISPR RNA (crRNA). Recognizes a short motif in the CRISPR repeat sequences (the 5' PAM or protospacer adjacent motif, TTTN in this organism) to help distinguish self versus nonself, as targets within the bacterial CRISPR locus do not have PAMs. Has dsDNA endonuclease activity, results in staggered 4-base 5' overhangs 19 and 22 bases downstream of the PAM on the non-targeted and targeted strand respectively. Non-target strand cleavage by the RuvC domain is probably a prerequisite of target strand cleavage by the Nuc domain. Protects E.coli against plasmids and bacteriophage M13mp18, phage T4 with hydroxymethyl or unmodified (but not glycosylated) cytosines and to a lesser extent against lambda and VpaE1 phage. In this CRISPR system correct processing of pre-crRNA requires only this protein and the CRISPR locus. The sequence is that of CRISPR-associated endonuclease Cas12a from Acidaminococcus sp. (strain BV3L6).